Reading from the N-terminus, the 2177-residue chain is Brefeldin A-inhibited guanine nucleotide-exchange protein 3 (2177 aa).

The span at 282–295 (TSSTSTSLESDSAS) shows a compositional bias: low complexity. The segment at 282–301 (TSSTSTSLESDSASPGVSDH) is disordered. Phosphoserine is present on Ser-471. The span at 511–524 (TGQTTLEGELGQTT) shows a compositional bias: polar residues. Disordered stretches follow at residues 511-542 (TGQT…PAIP), 617-636 (AAEK…DNCS), and 1031-1076 (DGAS…LSTA). An SEC7 domain is found at 583–796 (RTRSYGSRYS…EELYHQVLDR (214 aa)). The segment covering 618 to 627 (AEKDSGRSDV) has biased composition (basic and acidic residues). Phosphoserine occurs at positions 632 and 636. The segment covering 1032–1047 (GASQPPLTISQPQKAT) has biased composition (polar residues). Ser-1049 is modified (phosphoserine). Residues 1492–1512 (GPGFGIYAVVHLLLPVMSVWL) traverse the membrane as a helical segment. Disordered stretches follow at residues 1848–1877 (STDS…GKEK), 1946–2004 (ESST…RKKE), and 2033–2064 (KQQH…SPLL). The segment covering 1960–1974 (TPSEDDRSQSREHMG) has biased composition (basic and acidic residues). The residue at position 1991 (Ser-1991) is a Phosphoserine. 2 stretches are compositionally biased toward basic and acidic residues: residues 1993-2004 (KVEKKDPSRKKE) and 2043-2052 (KEVKVEKKGE). 5 positions are modified to phosphoserine: Ser-2079, Ser-2081, Ser-2095, Ser-2101, and Ser-2103. The disordered stretch occupies residues 2082–2103 (AGPELLRQDKRPRSGSTGSSLS).

In terms of assembly, interacts with PHB2. In terms of tissue distribution, expressed in breast cancer cell lines. Not expressed in normal tissues such as duct, mammary gland, lung, heart, liver, kidnay, bone marrow.

Its subcellular location is the cytoplasm. It is found in the cytoplasmic vesicle. It localises to the secretory vesicle. The protein localises to the secretory vesicle membrane. Its function is as follows. Participates in the regulation of systemic glucose homeostasis, where it negatively regulates insulin granule biogenesis in pancreatic islet beta cells. Also regulates glucagon granule production in pancreatic alpha cells. Inhibits nuclear translocation of the transcriptional coregulator PHB2 and may enhance estrogen receptor alpha (ESR1) transcriptional activity in breast cancer cells. The sequence is that of Brefeldin A-inhibited guanine nucleotide-exchange protein 3 from Homo sapiens (Human).